A 322-amino-acid chain; its full sequence is Protein-methionine-sulfoxide reductase catalytic subunit MsrP (322 aa).

A signal peptide (tat-type signal) is located at residues methionine 1 to alanine 59. Residues asparagine 79, tyrosine 82–glutamate 83, cysteine 137, threonine 172, asparagine 220, arginine 225, and serine 236–lysine 238 each bind Mo-molybdopterin.

It belongs to the MsrP family. In terms of assembly, heterodimer of a catalytic subunit (MsrP) and a heme-binding subunit (MsrQ). It depends on Mo-molybdopterin as a cofactor. In terms of processing, predicted to be exported by the Tat system. The position of the signal peptide cleavage has not been experimentally proven.

The protein localises to the periplasm. It carries out the reaction L-methionyl-[protein] + a quinone + H2O = L-methionyl-(S)-S-oxide-[protein] + a quinol. The enzyme catalyses L-methionyl-[protein] + a quinone + H2O = L-methionyl-(R)-S-oxide-[protein] + a quinol. Part of the MsrPQ system that repairs oxidized periplasmic proteins containing methionine sulfoxide residues (Met-O), using respiratory chain electrons. Thus protects these proteins from oxidative-stress damage caused by reactive species of oxygen and chlorine generated by the host defense mechanisms. MsrPQ is essential for the maintenance of envelope integrity under bleach stress, rescuing a wide series of structurally unrelated periplasmic proteins from methionine oxidation. The catalytic subunit MsrP is non-stereospecific, being able to reduce both (R-) and (S-) diastereoisomers of methionine sulfoxide. This is Protein-methionine-sulfoxide reductase catalytic subunit MsrP from Xanthomonas campestris pv. campestris (strain ATCC 33913 / DSM 3586 / NCPPB 528 / LMG 568 / P 25).